A 351-amino-acid polypeptide reads, in one-letter code: Foldase protein PrsA 1 (351 aa).

The first 22 residues, 1 to 22, serve as a signal peptide directing secretion; it reads MKNSNKLIASVVTLASVMALAA. Cys-23 carries the N-palmitoyl cysteine lipid modification. Cys-23 is lipidated: S-diacylglycerol cysteine. Residues 145-240 enclose the PpiC domain; the sequence is TPTMAVEMIT…KKFYIVKVTK (96 aa). Composition is skewed to low complexity over residues 303-317 and 326-351; these read KTKAASESSTTSESS and ESEQTQTSSAEEPTETEAQTQEPAAQ. The interval 303–351 is disordered; that stretch reads KTKAASESSTTSESSKAAEENPSESEQTQTSSAEEPTETEAQTQEPAAQ.

It belongs to the PrsA family.

It localises to the cell membrane. The enzyme catalyses [protein]-peptidylproline (omega=180) = [protein]-peptidylproline (omega=0). Plays a major role in protein secretion by helping the post-translocational extracellular folding of several secreted proteins. This is Foldase protein PrsA 1 (prsA1) from Streptococcus pyogenes serotype M18 (strain MGAS8232).